The primary structure comprises 427 residues: Serine--tRNA ligase (427 aa).

Position 236–238 (236–238 (TAE)) interacts with L-serine. 267 to 269 (RSE) contributes to the ATP binding site. E290 is a binding site for L-serine. 354–357 (EISS) contacts ATP. S388 contributes to the L-serine binding site.

The protein belongs to the class-II aminoacyl-tRNA synthetase family. Type-1 seryl-tRNA synthetase subfamily. Homodimer. The tRNA molecule binds across the dimer.

The protein localises to the cytoplasm. The enzyme catalyses tRNA(Ser) + L-serine + ATP = L-seryl-tRNA(Ser) + AMP + diphosphate + H(+). The catalysed reaction is tRNA(Sec) + L-serine + ATP = L-seryl-tRNA(Sec) + AMP + diphosphate + H(+). It functions in the pathway aminoacyl-tRNA biosynthesis; selenocysteinyl-tRNA(Sec) biosynthesis; L-seryl-tRNA(Sec) from L-serine and tRNA(Sec): step 1/1. Catalyzes the attachment of serine to tRNA(Ser). Is also able to aminoacylate tRNA(Sec) with serine, to form the misacylated tRNA L-seryl-tRNA(Sec), which will be further converted into selenocysteinyl-tRNA(Sec). This chain is Serine--tRNA ligase, found in Psychrobacter arcticus (strain DSM 17307 / VKM B-2377 / 273-4).